Consider the following 392-residue polypeptide: Ribosomal RNA large subunit methyltransferase G (392 aa).

This sequence belongs to the methyltransferase superfamily. RlmG family.

The protein resides in the cytoplasm. The enzyme catalyses guanosine(1835) in 23S rRNA + S-adenosyl-L-methionine = N(2)-methylguanosine(1835) in 23S rRNA + S-adenosyl-L-homocysteine + H(+). In terms of biological role, specifically methylates the guanine in position 1835 (m2G1835) of 23S rRNA. The protein is Ribosomal RNA large subunit methyltransferase G of Shewanella frigidimarina (strain NCIMB 400).